Reading from the N-terminus, the 305-residue chain is Ribosomal RNA small subunit methyltransferase H (305 aa).

S-adenosyl-L-methionine contacts are provided by residues 47 to 49 (GGH), D66, F93, D108, and Q115. The segment at 279–305 (ADSNEKLNNPRSRSAKLRLAKKRNPNE) is disordered. Over residues 291-305 (RSAKLRLAKKRNPNE) the composition is skewed to basic residues.

It belongs to the methyltransferase superfamily. RsmH family.

It localises to the cytoplasm. The enzyme catalyses cytidine(1402) in 16S rRNA + S-adenosyl-L-methionine = N(4)-methylcytidine(1402) in 16S rRNA + S-adenosyl-L-homocysteine + H(+). Functionally, specifically methylates the N4 position of cytidine in position 1402 (C1402) of 16S rRNA. The polypeptide is Ribosomal RNA small subunit methyltransferase H (Prochlorococcus marinus (strain SARG / CCMP1375 / SS120)).